Reading from the N-terminus, the 404-residue chain is Phosphopentomutase (404 aa).

Asp-10, Asp-303, His-308, Asp-344, His-345, and His-356 together coordinate Mn(2+).

This sequence belongs to the phosphopentomutase family. Requires Mn(2+) as cofactor.

It is found in the cytoplasm. The catalysed reaction is 2-deoxy-alpha-D-ribose 1-phosphate = 2-deoxy-D-ribose 5-phosphate. It carries out the reaction alpha-D-ribose 1-phosphate = D-ribose 5-phosphate. Its pathway is carbohydrate degradation; 2-deoxy-D-ribose 1-phosphate degradation; D-glyceraldehyde 3-phosphate and acetaldehyde from 2-deoxy-alpha-D-ribose 1-phosphate: step 1/2. Its function is as follows. Isomerase that catalyzes the conversion of deoxy-ribose 1-phosphate (dRib-1-P) and ribose 1-phosphate (Rib-1-P) to deoxy-ribose 5-phosphate (dRib-5-P) and ribose 5-phosphate (Rib-5-P), respectively. The chain is Phosphopentomutase from Shewanella putrefaciens (strain CN-32 / ATCC BAA-453).